The primary structure comprises 70 residues: Uteroglobin (70 aa).

It belongs to the secretoglobin family. As to quaternary structure, antiparallel homodimer; disulfide-linked. Interaction with LMBR1L is controversial. As to expression, club cells (nonciliated cells of the surface epithelium of the pulmonary airways).

Its subcellular location is the secreted. Binds phosphatidylcholine, phosphatidylinositol, polychlorinated biphenyls (PCB) and weakly progesterone, potent inhibitor of phospholipase A2. This chain is Uteroglobin (SCGB1A1), found in Macaca fuscata fuscata (Japanese macaque).